Here is a 368-residue protein sequence, read N- to C-terminus: MSECFTVMGDHIELVAGCYEQIVFGYRVCPADEEWTIEPTFTHHAHTASLNAVSSSNQFIATGSKDETIQLYDMCKKTEHGALLHHDGTISCLEFYGTSHLLSGGQDGLICVWSTKKWECLKTIRAHKGQVTSLSVHPSGKLALSVGTDKTLRTWNLIEGRSAFIKNIKQNAEIVLWSPDGDKYAVVVNDKVDIYTLDSATIIGTIAFTKRISCLKFLKNSLLAVGGDDESVRIYDVTSQKCVCEFKAHENRVKAIESFMKDDFCVLVTASNDGFIKLWKLNLESIESPTLLGQLNTTARLTCLCVWMPGETKETAEQPAQATTSEDVLDPLVPVRSKRVRILGEEVIMEDEKGSKTQGKKKKRQKVQ.

5 WD repeats span residues alanine 45 to alanine 82, histidine 85 to threonine 123, alanine 126 to isoleucine 165, alanine 207 to glutamate 245, and alanine 248 to proline 289.

Its subcellular location is the nucleus. The protein resides in the nucleolus. Functionally, negatively regulates the PAK1 kinase. PAK1 is a member of the PAK kinase family, which has been shown to play a positive role in the regulation of signaling pathways involving MAPK8 and RELA. PAK1 exists as an inactive homodimer, which is activated by binding of small GTPases such as CDC42 to an N-terminal regulatory domain. PAK1IP1 also binds to the N-terminus of PAK1, and inhibits the specific activation of PAK1 by CDC42. May be involved in ribosomal large subunit assembly. This Danio rerio (Zebrafish) protein is p21-activated protein kinase-interacting protein 1-like (pak1ip1).